A 478-amino-acid polypeptide reads, in one-letter code: V-type proton ATPase subunit H (478 aa).

Belongs to the V-ATPase H subunit family. V-ATPase is a heteromultimeric enzyme composed of a peripheral catalytic V1 complex (components A to H) attached to an integral membrane V0 proton pore complex (components: a, c, c', c'', d, e, f and VOA1). Interacts with YND1.

The protein resides in the vacuole membrane. Subunit of the V1 complex of vacuolar(H+)-ATPase (V-ATPase), a multisubunit enzyme composed of a peripheral complex (V1) that hydrolyzes ATP and a membrane integral complex (V0) that translocates protons. V-ATPase is responsible for acidifying and maintaining the pH of intracellular compartments. This subunit is essential for activity, but not assembly, of the enzyme complex. This subunit is also required for silencing the ATPase activity of V-ATPase when V1 is detached from V0. The chain is V-type proton ATPase subunit H from Saccharomyces cerevisiae (strain ATCC 204508 / S288c) (Baker's yeast).